Reading from the N-terminus, the 279-residue chain is Proteasome subunit beta (279 aa).

A propeptide spans 1-51 (MTFDASGRLPEAFLTPGGSSFMDFLAGHAPDLLPGRRSLGTGDLSKDVPHG) (removed in mature form; by autocatalysis). Catalysis depends on Thr52, which acts as the Nucleophile.

This sequence belongs to the peptidase T1B family. The 20S proteasome core is composed of 14 alpha and 14 beta subunits that assemble into four stacked heptameric rings, resulting in a barrel-shaped structure. The two inner rings, each composed of seven catalytic beta subunits, are sandwiched by two outer rings, each composed of seven alpha subunits. The catalytic chamber with the active sites is on the inside of the barrel. Has a gated structure, the ends of the cylinder being occluded by the N-termini of the alpha-subunits. Is capped by the proteasome-associated ATPase, ARC.

The protein resides in the cytoplasm. It carries out the reaction Cleavage of peptide bonds with very broad specificity.. It participates in protein degradation; proteasomal Pup-dependent pathway. Its activity is regulated as follows. The formation of the proteasomal ATPase ARC-20S proteasome complex, likely via the docking of the C-termini of ARC into the intersubunit pockets in the alpha-rings, may trigger opening of the gate for substrate entry. Interconversion between the open-gate and close-gate conformations leads to a dynamic regulation of the 20S proteasome proteolysis activity. In terms of biological role, component of the proteasome core, a large protease complex with broad specificity involved in protein degradation. This is Proteasome subunit beta from Kribbella flavida (strain DSM 17836 / JCM 10339 / NBRC 14399).